A 422-amino-acid polypeptide reads, in one-letter code: 3-phosphoshikimate 1-carboxyvinyltransferase (422 aa).

K20, S21, and R25 together coordinate 3-phosphoshikimate. Residue K20 participates in phosphoenolpyruvate binding. 2 residues coordinate phosphoenolpyruvate: G92 and R120. 3-phosphoshikimate-binding residues include S163, S164, Q165, S191, D304, and K331. Q165 provides a ligand contact to phosphoenolpyruvate. Catalysis depends on D304, which acts as the Proton acceptor. Phosphoenolpyruvate contacts are provided by R335 and R377.

Belongs to the EPSP synthase family. Monomer.

It localises to the cytoplasm. The catalysed reaction is 3-phosphoshikimate + phosphoenolpyruvate = 5-O-(1-carboxyvinyl)-3-phosphoshikimate + phosphate. Its pathway is metabolic intermediate biosynthesis; chorismate biosynthesis. Its function is as follows. Catalyzes the transfer of the enolpyruvyl moiety of phosphoenolpyruvate (PEP) to the 5-hydroxyl of shikimate-3-phosphate (S3P) to produce enolpyruvyl shikimate-3-phosphate and inorganic phosphate. In Methanocorpusculum labreanum (strain ATCC 43576 / DSM 4855 / Z), this protein is 3-phosphoshikimate 1-carboxyvinyltransferase.